A 212-amino-acid polypeptide reads, in one-letter code: Vesicle transport protein SFT2C (212 aa).

Topologically, residues 1-78 (MADLHRQLQD…TRGQRLVAGG (78 aa)) are cytoplasmic. The helical transmembrane segment at 79–99 (LCLLLAALCFGLAALYAPVLL) threads the bilayer. Residues 100-104 (LRARK) lie on the Lumenal side of the membrane. A helical transmembrane segment spans residues 105-125 (FALLWSLGSVLAWASAALLRG). Residues 126-142 (GPACGRLLRGEETPSRS) are Cytoplasmic-facing. A helical membrane pass occupies residues 143–165 (TLGYAAALGATLYAALVLRSTVL). Topologically, residues 166–174 (TALGACAQV) are lumenal. Residues 175–197 (AALLYALIGLLPWGGVTALRLAL) form a helical membrane-spanning segment. At 198–212 (GRLNRGTGLANALPV) the chain is on the cytoplasmic side.

Belongs to the SFT2 family.

Its subcellular location is the membrane. May be involved in fusion of retrograde transport vesicles derived from an endocytic compartment with the Golgi complex. In Mus musculus (Mouse), this protein is Vesicle transport protein SFT2C.